A 62-amino-acid chain; its full sequence is DNA-directed RNA polymerase subunit Rpo10 (62 aa).

Residues C6, C9, C43, and C44 each contribute to the Zn(2+) site.

It belongs to the archaeal Rpo10/eukaryotic RPB10 RNA polymerase subunit family. Part of the RNA polymerase complex. It depends on Zn(2+) as a cofactor.

It is found in the cytoplasm. It catalyses the reaction RNA(n) + a ribonucleoside 5'-triphosphate = RNA(n+1) + diphosphate. Functionally, DNA-dependent RNA polymerase (RNAP) catalyzes the transcription of DNA into RNA using the four ribonucleoside triphosphates as substrates. The protein is DNA-directed RNA polymerase subunit Rpo10 of Methanococcoides burtonii (strain DSM 6242 / NBRC 107633 / OCM 468 / ACE-M).